The chain runs to 303 residues: Ornithine carbamoyltransferase (303 aa).

Carbamoyl phosphate-binding positions include 52 to 55 (STRT), glutamine 79, arginine 103, and 130 to 133 (HPCQ). L-ornithine contacts are provided by residues asparagine 161, aspartate 221, and 225–226 (SM). Carbamoyl phosphate is bound by residues 260 to 261 (CL) and arginine 288.

It belongs to the aspartate/ornithine carbamoyltransferase superfamily. OTCase family.

The protein localises to the cytoplasm. The enzyme catalyses carbamoyl phosphate + L-ornithine = L-citrulline + phosphate + H(+). Its pathway is amino-acid biosynthesis; L-arginine biosynthesis; L-arginine from L-ornithine and carbamoyl phosphate: step 1/3. In terms of biological role, reversibly catalyzes the transfer of the carbamoyl group from carbamoyl phosphate (CP) to the N(epsilon) atom of ornithine (ORN) to produce L-citrulline. The protein is Ornithine carbamoyltransferase (argF) of Rhizobium meliloti (strain 1021) (Ensifer meliloti).